A 548-amino-acid polypeptide reads, in one-letter code: Chaperonin GroEL (548 aa).

Residues 30–33, K51, 87–91, G415, 479–481, and D495 contribute to the ATP site; these read TLGP, DGTTT, and NAA.

The protein belongs to the chaperonin (HSP60) family. Forms a cylinder of 14 subunits composed of two heptameric rings stacked back-to-back. Interacts with the co-chaperonin GroES.

Its subcellular location is the cytoplasm. It catalyses the reaction ATP + H2O + a folded polypeptide = ADP + phosphate + an unfolded polypeptide.. Functionally, together with its co-chaperonin GroES, plays an essential role in assisting protein folding. The GroEL-GroES system forms a nano-cage that allows encapsulation of the non-native substrate proteins and provides a physical environment optimized to promote and accelerate protein folding. The sequence is that of Chaperonin GroEL from Escherichia fergusonii (strain ATCC 35469 / DSM 13698 / CCUG 18766 / IAM 14443 / JCM 21226 / LMG 7866 / NBRC 102419 / NCTC 12128 / CDC 0568-73).